Here is a 409-residue protein sequence, read N- to C-terminus: Arginine deiminase (409 aa).

The Amidino-cysteine intermediate role is filled by C398.

Belongs to the arginine deiminase family.

Its subcellular location is the cytoplasm. It catalyses the reaction L-arginine + H2O = L-citrulline + NH4(+). It participates in amino-acid degradation; L-arginine degradation via ADI pathway; carbamoyl phosphate from L-arginine: step 1/2. This Metamycoplasma arthritidis (strain 158L3-1) (Mycoplasma arthritidis) protein is Arginine deiminase.